The primary structure comprises 269 residues: Nitrogen regulatory protein DAL80 (269 aa).

The GATA-type zinc-finger motif lies at 31–55; that stretch reads CQNCFTVKTPLWRRDEHGTVLCNAC.

It is found in the nucleus. Negative regulator of multiple nitrogen catabolic genes including the allantoin pathway genes. This chain is Nitrogen regulatory protein DAL80 (DAL80), found in Saccharomyces cerevisiae (strain ATCC 204508 / S288c) (Baker's yeast).